Reading from the N-terminus, the 294-residue chain is Elongation factor Ts (294 aa).

The tract at residues 81–84 is involved in Mg(2+) ion dislocation from EF-Tu; it reads TDFV.

This sequence belongs to the EF-Ts family.

The protein resides in the cytoplasm. Its function is as follows. Associates with the EF-Tu.GDP complex and induces the exchange of GDP to GTP. It remains bound to the aminoacyl-tRNA.EF-Tu.GTP complex up to the GTP hydrolysis stage on the ribosome. This is Elongation factor Ts from Hydrogenovibrio crunogenus (strain DSM 25203 / XCL-2) (Thiomicrospira crunogena).